Consider the following 1619-residue polypeptide: Rap-GAP domain-containing protein DDB_G0281809 (1619 aa).

4 disordered regions span residues 128–249 (SMSN…TTPI), 289–316 (QQQQ…MPGS), 907–974 (SIGG…PYIN), and 1134–1153 (ISNN…TSNN). Composition is skewed to low complexity over residues 130–204 (SNNN…SLSL) and 231–249 (QISA…TTPI). A coiled-coil region spans residues 265–295 (FNEVVQQQQQQQQQQQQQQQQQQQQQQQQQS). Composition is skewed to low complexity over residues 916 to 926 (SGNSSQPSSTG) and 934 to 965 (SGSK…NGGS). The 222-residue stretch at 1273-1494 (LNMLDSVSER…TNRKKLISDI (222 aa)) folds into the Rap-GAP domain. Residues 1554 to 1619 (IGTFTLPPPP…LSQSEDQSHK (66 aa)) form a disordered region. Positions 1559-1573 (LPPPPISPTISPQPS) are enriched in pro residues. The segment covering 1574-1590 (PHLSSSGGSWASSKGGS) has biased composition (low complexity). A compositionally biased stretch (polar residues) spans 1591–1619 (TQPTTPSGRTSNFLSRRPNLSQSEDQSHK).

The chain is Rap-GAP domain-containing protein DDB_G0281809 from Dictyostelium discoideum (Social amoeba).